Reading from the N-terminus, the 215-residue chain is Cytochrome b6 (215 aa).

The chain crosses the membrane as a helical span at residues 32–52 (IFYCLGGITFTSFLVQVATGF). A heme c-binding site is contributed by C35. Residues H86 and H100 each contribute to the heme b site. Transmembrane regions (helical) follow at residues 90–110 (ASMMVMMMILHVFRVYLTGGF), 116–136 (LTWVTGVIMAVCTVSFGVTGY), and 186–206 (LHTFVLPLATAVFMLAHFLMI). Heme b-binding residues include H187 and H202.

It belongs to the cytochrome b family. PetB subfamily. As to quaternary structure, the 4 large subunits of the cytochrome b6-f complex are cytochrome b6, subunit IV (17 kDa polypeptide, PetD), cytochrome f and the Rieske protein, while the 4 small subunits are PetG, PetL, PetM and PetN. The complex functions as a dimer. It depends on heme b as a cofactor. Requires heme c as cofactor.

The protein resides in the plastid. It is found in the chloroplast thylakoid membrane. Component of the cytochrome b6-f complex, which mediates electron transfer between photosystem II (PSII) and photosystem I (PSI), cyclic electron flow around PSI, and state transitions. In Oltmannsiellopsis viridis (Marine flagellate), this protein is Cytochrome b6.